Here is a 46-residue protein sequence, read N- to C-terminus: Escargot/snail protein homolog (46 aa).

3 consecutive C2H2-type zinc fingers follow at residues 1–4 (IRTH), 8–30 (CKCP…TTHH), and 36–46 (FSCQHCNRAFA).

Belongs to the snail C2H2-type zinc-finger protein family.

Its subcellular location is the nucleus. This is Escargot/snail protein homolog from Oryzias latipes (Japanese rice fish).